A 355-amino-acid polypeptide reads, in one-letter code: Uroporphyrinogen decarboxylase (355 aa).

Residues 27-31, Asp78, Tyr155, Ser210, and His328 each bind substrate; that span reads RQAGR.

The protein belongs to the uroporphyrinogen decarboxylase family. In terms of assembly, homodimer.

Its subcellular location is the cytoplasm. The enzyme catalyses uroporphyrinogen III + 4 H(+) = coproporphyrinogen III + 4 CO2. It functions in the pathway porphyrin-containing compound metabolism; protoporphyrin-IX biosynthesis; coproporphyrinogen-III from 5-aminolevulinate: step 4/4. In terms of biological role, catalyzes the decarboxylation of four acetate groups of uroporphyrinogen-III to yield coproporphyrinogen-III. This Pseudomonas fluorescens (strain ATCC BAA-477 / NRRL B-23932 / Pf-5) protein is Uroporphyrinogen decarboxylase.